We begin with the raw amino-acid sequence, 191 residues long: Adenylate kinase (191 aa).

Residue 10-15 coordinates ATP; that stretch reads GAGKGT. Residues 30-59 form an NMP region; it reads STGDIFRANVTEGTPLGVEAKRYMDAGEYV. Residues threonine 31, arginine 36, 57 to 59, 85 to 88, and glutamine 92 each bind AMP; these read EYV and GYPR. The LID stretch occupies residues 126 to 136; it reads QRAQVEGRADD. Arginine 127 provides a ligand contact to ATP. Residues arginine 133 and arginine 144 each coordinate AMP. Residue glycine 172 participates in ATP binding.

This sequence belongs to the adenylate kinase family. As to quaternary structure, monomer.

The protein localises to the cytoplasm. The catalysed reaction is AMP + ATP = 2 ADP. It functions in the pathway purine metabolism; AMP biosynthesis via salvage pathway; AMP from ADP: step 1/1. In terms of biological role, catalyzes the reversible transfer of the terminal phosphate group between ATP and AMP. Plays an important role in cellular energy homeostasis and in adenine nucleotide metabolism. The polypeptide is Adenylate kinase (Nocardioides sp. (strain ATCC BAA-499 / JS614)).